A 169-amino-acid chain; its full sequence is Peptide deformylase (169 aa).

Residues Cys-91 and His-133 each contribute to the Fe cation site. The active site involves Glu-134. His-137 is a binding site for Fe cation.

This sequence belongs to the polypeptide deformylase family. It depends on Fe(2+) as a cofactor.

The catalysed reaction is N-terminal N-formyl-L-methionyl-[peptide] + H2O = N-terminal L-methionyl-[peptide] + formate. Functionally, removes the formyl group from the N-terminal Met of newly synthesized proteins. Requires at least a dipeptide for an efficient rate of reaction. N-terminal L-methionine is a prerequisite for activity but the enzyme has broad specificity at other positions. The polypeptide is Peptide deformylase (Haemophilus influenzae (strain 86-028NP)).